Here is a 188-residue protein sequence, read N- to C-terminus: UPF0398 protein BBR47_29830 (188 aa).

The protein belongs to the UPF0398 family.

This chain is UPF0398 protein BBR47_29830, found in Brevibacillus brevis (strain 47 / JCM 6285 / NBRC 100599).